A 252-amino-acid polypeptide reads, in one-letter code: Imidazole glycerol phosphate synthase subunit HisF (252 aa).

Catalysis depends on residues Asp-11 and Asp-130.

It belongs to the HisA/HisF family. As to quaternary structure, heterodimer of HisH and HisF.

It localises to the cytoplasm. It catalyses the reaction 5-[(5-phospho-1-deoxy-D-ribulos-1-ylimino)methylamino]-1-(5-phospho-beta-D-ribosyl)imidazole-4-carboxamide + L-glutamine = D-erythro-1-(imidazol-4-yl)glycerol 3-phosphate + 5-amino-1-(5-phospho-beta-D-ribosyl)imidazole-4-carboxamide + L-glutamate + H(+). The protein operates within amino-acid biosynthesis; L-histidine biosynthesis; L-histidine from 5-phospho-alpha-D-ribose 1-diphosphate: step 5/9. Its function is as follows. IGPS catalyzes the conversion of PRFAR and glutamine to IGP, AICAR and glutamate. The HisF subunit catalyzes the cyclization activity that produces IGP and AICAR from PRFAR using the ammonia provided by the HisH subunit. In Halothermothrix orenii (strain H 168 / OCM 544 / DSM 9562), this protein is Imidazole glycerol phosphate synthase subunit HisF.